The following is a 408-amino-acid chain: LL-diaminopimelate aminotransferase (408 aa).

Y15 and G42 together coordinate substrate. Residues Y72, S108–K109, Y132, N187, Y218, and S246–S248 each bind pyridoxal 5'-phosphate. Substrate contacts are provided by K109, Y132, and N187. K249 carries the N6-(pyridoxal phosphate)lysine modification. Residues R257 and N292 each coordinate pyridoxal 5'-phosphate. Positions 292 and 388 each coordinate substrate.

Belongs to the class-I pyridoxal-phosphate-dependent aminotransferase family. LL-diaminopimelate aminotransferase subfamily. Homodimer. Requires pyridoxal 5'-phosphate as cofactor.

It catalyses the reaction (2S,6S)-2,6-diaminopimelate + 2-oxoglutarate = (S)-2,3,4,5-tetrahydrodipicolinate + L-glutamate + H2O + H(+). The protein operates within amino-acid biosynthesis; L-lysine biosynthesis via DAP pathway; LL-2,6-diaminopimelate from (S)-tetrahydrodipicolinate (aminotransferase route): step 1/1. Involved in the synthesis of meso-diaminopimelate (m-DAP or DL-DAP), required for both lysine and peptidoglycan biosynthesis. Catalyzes the direct conversion of tetrahydrodipicolinate to LL-diaminopimelate. The polypeptide is LL-diaminopimelate aminotransferase (Leptospira interrogans serogroup Icterohaemorrhagiae serovar Lai (strain 56601)).